The chain runs to 248 residues: Probable transcriptional regulatory protein Atu3727 (248 aa).

Residues 1-21 (MAGHSQFKNIMHRKGKQDSVR) are disordered.

This sequence belongs to the TACO1 family.

Its subcellular location is the cytoplasm. The protein is Probable transcriptional regulatory protein Atu3727 of Agrobacterium fabrum (strain C58 / ATCC 33970) (Agrobacterium tumefaciens (strain C58)).